A 201-amino-acid polypeptide reads, in one-letter code: Glycerol-3-phosphate acyltransferase (201 aa).

Helical transmembrane passes span 10–30 (ALIL…GIVI), 59–79 (PAAL…VLIA), 87–107 (AAQL…WLGF), 116–136 (FLGT…LTWL), and 161–181 (ILLG…LIFI).

It belongs to the PlsY family. Probably interacts with PlsX.

It localises to the cell inner membrane. It carries out the reaction an acyl phosphate + sn-glycerol 3-phosphate = a 1-acyl-sn-glycero-3-phosphate + phosphate. It participates in lipid metabolism; phospholipid metabolism. In terms of biological role, catalyzes the transfer of an acyl group from acyl-phosphate (acyl-PO(4)) to glycerol-3-phosphate (G3P) to form lysophosphatidic acid (LPA). This enzyme utilizes acyl-phosphate as fatty acyl donor, but not acyl-CoA or acyl-ACP. In Cereibacter sphaeroides (strain ATCC 17029 / ATH 2.4.9) (Rhodobacter sphaeroides), this protein is Glycerol-3-phosphate acyltransferase.